The primary structure comprises 92 residues: Protein S100-A12 (92 aa).

2 EF-hand domains span residues 13–48 and 49–84; these read NIFH…LQNT and KDQP…VLKT. Cu cation is bound at residue His16. His16 lines the Zn(2+) pocket. Positions 19 and 24 each coordinate Ca(2+). Asp26 contacts Cu cation. Residue Asp26 participates in Zn(2+) binding. Residues Thr27 and Glu32 each contribute to the Ca(2+) site. The hinge domain stretch occupies residues 38–53; that stretch reads TKELPKTLQNTKDQPT. Ca(2+) contacts are provided by Asp62, Asp64, Asp66, and Glu73. Cu cation-binding residues include His86 and His90. His86 and His90 together coordinate Zn(2+).

Belongs to the S-100 family. As to quaternary structure, homodimer. Homooligomer (tetramer or hexamer) in the presence of calcium, zinc and copper ions. Interacts with AGER and both calcium and zinc are essential for the interaction. Interacts with CACYBP in a calcium-dependent manner. In terms of tissue distribution, up-regulated in stimulated inflammatory effector cells.

Its subcellular location is the secreted. The protein localises to the cytoplasm. It is found in the cytoskeleton. The protein resides in the cell membrane. In terms of biological role, S100A12 is a calcium-, zinc- and copper-binding protein which plays a prominent role in the regulation of inflammatory processes and immune response. Its pro-inflammatory activity involves recruitment of leukocytes, promotion of cytokine and chemokine production, and regulation of leukocyte adhesion and migration. Acts as an alarmin or a danger associated molecular pattern (DAMP) molecule and stimulates innate immune cells via binding to receptor for advanced glycation endproducts (AGER). Binding to AGER activates the MAP-kinase and NF-kappa-B signaling pathways leading to production of pro-inflammatory cytokines and up-regulation of cell adhesion molecules ICAM1 and VCAM1. Acts as a monocyte and mast cell chemoattractant. Can stimulate mast cell degranulation and activation which generates chemokines, histamine and cytokines inducing further leukocyte recruitment to the sites of inflammation. Can inhibit the activity of matrix metalloproteinases; MMP2, MMP3 and MMP9 by chelating Zn(2+) from their active sites. This Bos taurus (Bovine) protein is Protein S100-A12 (S100A12).